Reading from the N-terminus, the 355-residue chain is Septin-2B (355 aa).

The Septin-type G domain occupies 33-305; sequence KGFEFTLMVV…ENFRSERLKK (273 aa). The segment at 43 to 50 is G1 motif; it reads GESGLGKS. GTP-binding positions include 43–50, T77, G103, 182–190, G240, and R255; these read GESGLGKS and KADTLTLRE. Residues 100 to 103 are G3 motif; the sequence is DTPG. Positions 181-184 are G4 motif; that stretch reads AKAD. Positions 259–269 are important for dimerization; sequence WGVVEVENPEH.

Belongs to the TRAFAC class TrmE-Era-EngA-EngB-Septin-like GTPase superfamily. Septin GTPase family. As to quaternary structure, septins polymerize into heterooligomeric protein complexes that form filaments, and associate with cellular membranes, actin filaments and microtubules. GTPase activity is required for filament formation. Can form heterooligomers with other family members and form filaments. Interacts with wdpcp.

The protein resides in the cytoplasm. It is found in the cytoskeleton. It localises to the spindle. Its subcellular location is the cleavage furrow. The protein localises to the midbody. The protein resides in the cell cortex. It is found in the cell projection. It localises to the cilium membrane. Functionally, filament-forming cytoskeletal GTPase. Required for normal organization of the actin cytoskeleton. Plays a role in the biogenesis of polarized columnar-shaped epithelium. Required for the progression through mitosis through regulation of chromosome congression. During anaphase, may be required for chromosome segregation and spindle elongation. Plays a role in ciliogenesis and collective cell movements including convergent extension during gastrulation. In cilia, required for the integrity of the diffusion barrier at the base of the primary cilium that prevents diffusion of transmembrane proteins between the cilia and plasma membranes. Controls cell shape and not polarization of cells during convergent extension. The chain is Septin-2B (sept2-B) from Xenopus tropicalis (Western clawed frog).